Reading from the N-terminus, the 539-residue chain is Tyrosine-protein kinase csk-1 (539 aa).

The SH3 domain occupies 43-110 (SPGNDVIVTR…HADCVVRING (68 aa)). The disordered stretch occupies residues 129–148 (PGAASTTSSTSSHHSTAANH). Positions 131 to 146 (AASTTSSTSSHHSTAA) are enriched in low complexity. Residues 151 to 241 (WFHSMISREN…GLCHRLVTPI (91 aa)) form the SH2 domain. The 253-residue stretch at 283–535 (IDVGDTIGHG…GQVLQRLTTI (253 aa)) folds into the Protein kinase domain. Residues 289 to 297 (IGHGEFGDV) and K310 contribute to the ATP site. D403 acts as the Proton acceptor in catalysis.

Belongs to the protein kinase superfamily. Tyr protein kinase family. CSK subfamily. Requires Mg(2+) as cofactor. The cofactor is Mn(2+). In terms of tissue distribution, expressed predominantly in pharyngeal muscles in procorpus, metacorpus and terminal bulb. Expressed also in some neurons (ASE, ADF, AVA, AUA, RMDV and BAG) in the head region, anchor cell, vulva, cells around anus, body wall muscle and gondal distal tip cells.

The enzyme catalyses L-tyrosyl-[protein] + ATP = O-phospho-L-tyrosyl-[protein] + ADP + H(+). In terms of biological role, non-receptor tyrosine-protein kinase which plays a role in pharynx function by regulating pumping and the orientation of pharyngeal muscle fibers, independently of src-1 and src-2. May phosphorylate and thereby negatively regulate src-1 and src-2 activities. The protein is Tyrosine-protein kinase csk-1 of Caenorhabditis elegans.